The sequence spans 230 residues: Lipoprotein-releasing system ATP-binding protein LolD (230 aa).

Positions 6–230 constitute an ABC transporter domain; it reads LQVQAVSKSY…GYLQVPESAQ (225 aa). 42 to 49 lines the ATP pocket; that stretch reads GTSGSGKS.

The protein belongs to the ABC transporter superfamily. Lipoprotein translocase (TC 3.A.1.125) family. The complex is composed of two ATP-binding proteins (LolD) and two transmembrane proteins (LolC and LolE).

It localises to the cell inner membrane. Part of the ABC transporter complex LolCDE involved in the translocation of mature outer membrane-directed lipoproteins, from the inner membrane to the periplasmic chaperone, LolA. Responsible for the formation of the LolA-lipoprotein complex in an ATP-dependent manner. In Shewanella oneidensis (strain ATCC 700550 / JCM 31522 / CIP 106686 / LMG 19005 / NCIMB 14063 / MR-1), this protein is Lipoprotein-releasing system ATP-binding protein LolD.